Reading from the N-terminus, the 487-residue chain is 26S proteasome non-ATPase regulatory subunit 3 homolog B (487 aa).

Positions 1-21 are disordered; sequence MTQDVEMKDNQTPTQSVVSAP. Over residues 10 to 21 the composition is skewed to polar residues; it reads NQTPTQSVVSAP. Positions 239–420 constitute a PCI domain; the sequence is CRYLFYLGKI…GCMVSKETGD (182 aa). The interval 452–487 is disordered; that stretch reads PPNTHREKESEEKRREMKQQEEELAKYMAEEDDDDF. Residues 455-480 are compositionally biased toward basic and acidic residues; that stretch reads THREKESEEKRREMKQQEEELAKYMA.

Belongs to the proteasome subunit S3 family. In terms of assembly, component of the 19S regulatory particle (RP/PA700) lid subcomplex of the 26S proteasome. The 26S proteasome is composed of a core protease (CP), known as the 20S proteasome, capped at one or both ends by the 19S regulatory particle (RP/PA700). The RP/PA700 complex is composed of at least 17 different subunits in two subcomplexes, the base and the lid, which form the portions proximal and distal to the 20S proteolytic core, respectively. Interacts with UCH1 and UCH2. In terms of tissue distribution, preferentially expressed in flowers.

Its function is as follows. Acts as a regulatory subunit of the 26 proteasome which is involved in the ATP-dependent degradation of ubiquitinated proteins. The polypeptide is 26S proteasome non-ATPase regulatory subunit 3 homolog B (Arabidopsis thaliana (Mouse-ear cress)).